We begin with the raw amino-acid sequence, 298 residues long: Homoserine kinase (298 aa).

Position 85–95 (85–95 (PMGGLGSSAAS)) interacts with ATP.

The protein belongs to the GHMP kinase family. Homoserine kinase subfamily.

The protein localises to the cytoplasm. It carries out the reaction L-homoserine + ATP = O-phospho-L-homoserine + ADP + H(+). It functions in the pathway amino-acid biosynthesis; L-threonine biosynthesis; L-threonine from L-aspartate: step 4/5. Its function is as follows. Catalyzes the ATP-dependent phosphorylation of L-homoserine to L-homoserine phosphate. The protein is Homoserine kinase of Methanopyrus kandleri (strain AV19 / DSM 6324 / JCM 9639 / NBRC 100938).